A 248-amino-acid chain; its full sequence is Small ribosomal subunit protein uS3 (248 aa).

In terms of domain architecture, KH type-2 spans 39 to 111 (IRKYLNKVYK…EIVFNVVEVK (73 aa)). A disordered region spans residues 222–248 (KPFEASAPRPQRRNRKEANNYVNAKKN).

It belongs to the universal ribosomal protein uS3 family. In terms of assembly, part of the 30S ribosomal subunit. Forms a tight complex with proteins S10 and S14.

In terms of biological role, binds the lower part of the 30S subunit head. Binds mRNA in the 70S ribosome, positioning it for translation. The protein is Small ribosomal subunit protein uS3 of Alteracholeplasma palmae (strain ATCC 49389 / J233) (Acholeplasma palmae).